The chain runs to 149 residues: uncharacterized protein (149 aa).

Positions 16–128 (PAGEPAIRVI…LFTFVAIDED (113 aa)) constitute a HotDog ACOT-type domain.

It belongs to the acyl coenzyme A hydrolase family.

This is an uncharacterized protein from Zymomonas mobilis subsp. mobilis (strain ATCC 31821 / ZM4 / CP4).